Consider the following 139-residue polypeptide: Maintenance of telomere capping protein 7 (139 aa).

2 helical membrane passes run 13 to 33 and 42 to 62; these read SHHVLFAEPGFFLCNFFFVLL and FYFLFILLFIIYIAIIYFVFI. The interval 94–121 is disordered; that stretch reads RSVANPALPPQKKKKKKKKGTLRTGEVE. The segment covering 104 to 114 has biased composition (basic residues); the sequence is QKKKKKKKKGT.

It localises to the membrane. Functionally, may be involved in telomere capping. The polypeptide is Maintenance of telomere capping protein 7 (MTC7) (Saccharomyces cerevisiae (strain ATCC 204508 / S288c) (Baker's yeast)).